The sequence spans 113 residues: P antigen family member 3 (113 aa).

Residues 1-12 (MSGHQRTRSRSR) show a composition bias toward basic residues. Disordered regions lie at residues 1-61 (MSGH…EGAL) and 78-113 (SKTG…QPSV).

Belongs to the GAGE family.

This is P antigen family member 3 (PAGE3) from Homo sapiens (Human).